Here is a 134-residue protein sequence, read N- to C-terminus: ATP synthase epsilon chain (134 aa).

Belongs to the ATPase epsilon chain family. In terms of assembly, F-type ATPases have 2 components, CF(1) - the catalytic core - and CF(0) - the membrane proton channel. CF(1) has five subunits: alpha(3), beta(3), gamma(1), delta(1), epsilon(1). CF(0) has three main subunits: a, b and c.

It is found in the cellular thylakoid membrane. Produces ATP from ADP in the presence of a proton gradient across the membrane. The chain is ATP synthase epsilon chain from Prochlorococcus marinus (strain MIT 9312).